Here is a 1113-residue protein sequence, read N- to C-terminus: Myosin-binding protein 1 (1113 aa).

A helical membrane pass occupies residues 12–34; it reads LAFNEWLLMFMLFVNSIFSYVIA. Residues 209–229 are disordered; sequence ESEAVFSDTEPKQESSLNHLP. The 99-residue stretch at 888–986 folds into the GTD-binding domain; it reads SEGDRLKRQV…DLEAEIEYFR (99 aa).

Interacts with myosin XI-K, XI-I and XI-1. As to expression, expressed in leaf epidermal cells, roots and root hairs.

The protein localises to the endomembrane system. In terms of biological role, membrane-anchored myosin receptors that define a distinct, plant-specific transport vesicle compartment. This Arabidopsis thaliana (Mouse-ear cress) protein is Myosin-binding protein 1.